The primary structure comprises 1387 residues: DNA-directed RNA polymerase subunit beta'' (1387 aa).

Positions 220, 291, 298, and 301 each coordinate Zn(2+).

Belongs to the RNA polymerase beta' chain family. RpoC2 subfamily. In terms of assembly, in plastids the minimal PEP RNA polymerase catalytic core is composed of four subunits: alpha, beta, beta', and beta''. When a (nuclear-encoded) sigma factor is associated with the core the holoenzyme is formed, which can initiate transcription. It depends on Zn(2+) as a cofactor.

The protein localises to the plastid. It is found in the chloroplast. It catalyses the reaction RNA(n) + a ribonucleoside 5'-triphosphate = RNA(n+1) + diphosphate. DNA-dependent RNA polymerase catalyzes the transcription of DNA into RNA using the four ribonucleoside triphosphates as substrates. This Carica papaya (Papaya) protein is DNA-directed RNA polymerase subunit beta''.